The chain runs to 213 residues: NADH-quinone oxidoreductase subunit C (213 aa).

The protein belongs to the complex I 30 kDa subunit family. In terms of assembly, NDH-1 is composed of 15 different subunits. Subunits NuoB, C, D, E, F, and G constitute the peripheral sector of the complex.

Its subcellular location is the cell membrane. The catalysed reaction is a quinone + NADH + 5 H(+)(in) = a quinol + NAD(+) + 4 H(+)(out). In terms of biological role, NDH-1 shuttles electrons from NADH, via FMN and iron-sulfur (Fe-S) centers, to quinones in the respiratory chain. The immediate electron acceptor for the enzyme in this species is believed to be a menaquinone. Couples the redox reaction to proton translocation (for every two electrons transferred, four hydrogen ions are translocated across the cytoplasmic membrane), and thus conserves the redox energy in a proton gradient. In Deinococcus geothermalis (strain DSM 11300 / CIP 105573 / AG-3a), this protein is NADH-quinone oxidoreductase subunit C.